A 34-amino-acid chain; its full sequence is Sarcoplasmic/endoplasmic reticulum calcium ATPase regulator DWORF (34 aa).

Residues 12–32 form a helical membrane-spanning segment; it reads IVPILLLVGWIVGCIIVIYIV.

As to quaternary structure, homooligomer. Can also form heterooligomers with other sarcoplasmic/endoplasmic reticulum calcium ATPase (SERCA) regulators ARLN, ERLN, PLN and SLN. Monomer. Interacts with ATP2A1/SERCA1; the interaction results in activation of ATP2A1. Interacts as a monomer with ATP2A2/SERCA2; the interaction results in activation of ATP2A2. In terms of tissue distribution, highly expressed in heart (at protein level). Detected in heart and soleus, a postural muscle group of the hindlimb containing the highest enrichment of slow-twitch muscle fibers. Also expressed in diaphragm, which contains some slow-twitch fibers. Not detected in the quadriceps, a fast-twitch muscle group, or in cardiac atrial muscle. Not expressed in the prenatal heart but gradually increases in abundance postnatally.

It is found in the sarcoplasmic reticulum membrane. Functionally, enhances the activity of ATP2A1/SERCA1 ATPase in sarcoplasmic reticulum by displacing ATP2A1/SERCA1 inhibitors, thereby acting as a key regulator of skeletal muscle activity. Also enhances the activity of the ATP2A2/SERCA2 ATPase. Does not directly stimulate SERCA pump activity. Binds preferentially to the phosphorylated E1 and E2 conformational forms of ATP2A2 which predominate at high Ca(2+) concentrations during the systolic phase of the cardiac cycle. Competes with ATP2A2 inhibitor phospholamban (PLN) for binding to ATP2A2 and displaces PLN. Can activate ATP2A2 directly in the absence of PLN. Also enhances sarcoplasmic reticulum Ca(2+) uptake and myocyte contractility by displacing the SERCA inhibitory peptides sarcolipin (SLN) and myoregulin (MRLN). This chain is Sarcoplasmic/endoplasmic reticulum calcium ATPase regulator DWORF, found in Mus musculus (Mouse).